We begin with the raw amino-acid sequence, 259 residues long: Type III pantothenate kinase (259 aa).

Residue 9-16 (DAGNSRIK) coordinates ATP. Substrate-binding positions include tyrosine 93 and 100–103 (GSDR). Aspartate 102 (proton acceptor) is an active-site residue. Threonine 126 contributes to the ATP binding site. Threonine 190 provides a ligand contact to substrate.

The protein belongs to the type III pantothenate kinase family. In terms of assembly, homodimer. NH4(+) is required as a cofactor. It depends on K(+) as a cofactor.

It localises to the cytoplasm. The enzyme catalyses (R)-pantothenate + ATP = (R)-4'-phosphopantothenate + ADP + H(+). It participates in cofactor biosynthesis; coenzyme A biosynthesis; CoA from (R)-pantothenate: step 1/5. In terms of biological role, catalyzes the phosphorylation of pantothenate (Pan), the first step in CoA biosynthesis. In Burkholderia pseudomallei (strain K96243), this protein is Type III pantothenate kinase.